We begin with the raw amino-acid sequence, 491 residues long: Myocilin (491 aa).

A signal peptide spans 1–18 (MPAVQLLLLACPVWDVGA). A glycan (N-linked (GlcNAc...) asparagine) is linked at asparagine 43. The stretch at 98 to 171 (QETPEGLQRE…QEVARLRRGQ (74 aa)) forms a coiled coil. A disordered region spans residues 151-189 (ENLARRLESSSQEVARLRRGQCPQTRDTARDVPPGSREV). Residues 231–490 (GCGELVWVGE…MVTYDIKLSK (260 aa)) enclose the Olfactomedin-like domain. A disulfide bridge links cysteine 232 with cysteine 420. Ca(2+)-binding residues include aspartate 367, asparagine 415, alanine 416, isoleucine 464, and aspartate 465.

Homodimer (via N-terminus). Can also form higher oligomers. Interacts with OLFM3, FN1, NRCAM, GLDN and NFASC. Interacts (via N-terminus) with MYL2. Interacts with SFRP1, FRZB, FZD7, FZD10, FZD1 and WIF1; regulates Wnt signaling. Interacts with SNTA1; regulates muscle hypertrophy. Interacts with ERBB2 and ERBB3; activates ERBB2-ERBB3 signaling pathway. Interacts with SNCG; affects its secretion and its aggregation. Palmitoylated. In terms of processing, undergoes a calcium-dependent proteolytic cleavage at Arg-213 by CAPN2 in the endoplasmic reticulum. The result is the production of two fragments, one of 35 kDa containing the C-terminal olfactomedin-like domain, and another of 20 kDa containing the N-terminal leucine zipper-like domain. Post-translationally, glycosylated.

The protein localises to the secreted. It is found in the golgi apparatus. The protein resides in the cytoplasmic vesicle. Its subcellular location is the extracellular space. It localises to the extracellular matrix. The protein localises to the extracellular exosome. It is found in the mitochondrion. The protein resides in the mitochondrion intermembrane space. Its subcellular location is the mitochondrion inner membrane. It localises to the mitochondrion outer membrane. The protein localises to the rough endoplasmic reticulum. It is found in the cell projection. The protein resides in the cilium. Its subcellular location is the endoplasmic reticulum. In terms of biological role, secreted glycoprotein regulating the activation of different signaling pathways in adjacent cells to control different processes including cell adhesion, cell-matrix adhesion, cytoskeleton organization and cell migration. Promotes substrate adhesion, spreading and formation of focal contacts. Negatively regulates cell-matrix adhesion and stress fiber assembly through Rho protein signal transduction. Modulates the organization of actin cytoskeleton by stimulating the formation of stress fibers through interactions with components of Wnt signaling pathways. Promotes cell migration through activation of PTK2 and the downstream phosphatidylinositol 3-kinase signaling. Plays a role in bone formation and promotes osteoblast differentiation in a dose-dependent manner through mitogen-activated protein kinase signaling. Mediates myelination in the peripheral nervous system through ERBB2/ERBB3 signaling. Plays a role as a regulator of muscle hypertrophy through the components of dystrophin-associated protein complex. Involved in positive regulation of mitochondrial depolarization. Plays a role in neurite outgrowth. May participate in the obstruction of fluid outflow in the trabecular meshwork. The chain is Myocilin (MYOC) from Macaca fascicularis (Crab-eating macaque).